The chain runs to 462 residues: Argininosuccinate lyase (462 aa).

The protein belongs to the lyase 1 family. Argininosuccinate lyase subfamily.

It localises to the cytoplasm. It carries out the reaction 2-(N(omega)-L-arginino)succinate = fumarate + L-arginine. The protein operates within amino-acid biosynthesis; L-arginine biosynthesis; L-arginine from L-ornithine and carbamoyl phosphate: step 3/3. The sequence is that of Argininosuccinate lyase from Prochlorococcus marinus (strain SARG / CCMP1375 / SS120).